A 351-amino-acid polypeptide reads, in one-letter code: Methylthioribose-1-phosphate isomerase (351 aa).

Substrate is bound by residues 53-55, arginine 96, and glutamine 205; that span reads RGA. The active-site Proton donor is the aspartate 246. 256 to 257 lines the substrate pocket; that stretch reads NK.

This sequence belongs to the eIF-2B alpha/beta/delta subunits family. MtnA subfamily.

The enzyme catalyses 5-(methylsulfanyl)-alpha-D-ribose 1-phosphate = 5-(methylsulfanyl)-D-ribulose 1-phosphate. It participates in amino-acid biosynthesis; L-methionine biosynthesis via salvage pathway; L-methionine from S-methyl-5-thio-alpha-D-ribose 1-phosphate: step 1/6. In terms of biological role, catalyzes the interconversion of methylthioribose-1-phosphate (MTR-1-P) into methylthioribulose-1-phosphate (MTRu-1-P). The sequence is that of Methylthioribose-1-phosphate isomerase from Synechocystis sp. (strain ATCC 27184 / PCC 6803 / Kazusa).